Reading from the N-terminus, the 277-residue chain is Sulfur carrier protein FdhD (277 aa).

Residue C121 is the Cysteine persulfide intermediate of the active site. A Mo-bis(molybdopterin guanine dinucleotide)-binding site is contributed by F260–R265.

It belongs to the FdhD family.

The protein localises to the cytoplasm. Functionally, required for formate dehydrogenase (FDH) activity. Acts as a sulfur carrier protein that transfers sulfur from IscS to the molybdenum cofactor prior to its insertion into FDH. The polypeptide is Sulfur carrier protein FdhD (Escherichia coli O8 (strain IAI1)).